We begin with the raw amino-acid sequence, 226 residues long: tRNA (guanine-N(1)-)-methyltransferase (226 aa).

S-adenosyl-L-methionine is bound by residues Gly-110 and 130–135; that span reads IGDFIL.

The protein belongs to the RNA methyltransferase TrmD family. Homodimer.

The protein resides in the cytoplasm. It carries out the reaction guanosine(37) in tRNA + S-adenosyl-L-methionine = N(1)-methylguanosine(37) in tRNA + S-adenosyl-L-homocysteine + H(+). Functionally, specifically methylates guanosine-37 in various tRNAs. This chain is tRNA (guanine-N(1)-)-methyltransferase, found in Nitratiruptor sp. (strain SB155-2).